The following is a 213-amino-acid chain: MKYFATICIAAYAGLAGAGGLKSLEVFVKTVNTGRADFTQVVTAPAKAGQAPRVKTSSGTFEFSRPNRFKFVYKKPFEQNIVADGQTLWLYDVDLNQVTARQQSKVLGSTPAALIAAAPDLRALQADFTLADAPDKDGLQWAAATPKSKDGQLQSVRVGFRAGEQAAELAALEILDSFGQRSVLSFSRFEVNPALPGNSFQFKPPAGADVIRQ.

The signal sequence occupies residues 1 to 18; the sequence is MKYFATICIAAYAGLAGA.

This sequence belongs to the LolA family. As to quaternary structure, monomer.

The protein localises to the periplasm. Its function is as follows. Participates in the translocation of lipoproteins from the inner membrane to the outer membrane. Only forms a complex with a lipoprotein if the residue after the N-terminal Cys is not an aspartate (The Asp acts as a targeting signal to indicate that the lipoprotein should stay in the inner membrane). The polypeptide is Outer-membrane lipoprotein carrier protein (Albidiferax ferrireducens (strain ATCC BAA-621 / DSM 15236 / T118) (Rhodoferax ferrireducens)).